Here is a 222-residue protein sequence, read N- to C-terminus: Triosephosphate isomerase (222 aa).

9–11 (NYK) serves as a coordination point for substrate. The Electrophile role is filled by histidine 93. The active-site Proton acceptor is glutamate 141. Substrate contacts are provided by residues isoleucine 146, glycine 181, and 202-203 (AS).

This sequence belongs to the triosephosphate isomerase family. As to quaternary structure, homotetramer; dimer of dimers.

It is found in the cytoplasm. It catalyses the reaction D-glyceraldehyde 3-phosphate = dihydroxyacetone phosphate. Its pathway is carbohydrate biosynthesis; gluconeogenesis. The protein operates within carbohydrate degradation; glycolysis; D-glyceraldehyde 3-phosphate from glycerone phosphate: step 1/1. In terms of biological role, involved in the gluconeogenesis. Catalyzes stereospecifically the conversion of dihydroxyacetone phosphate (DHAP) to D-glyceraldehyde-3-phosphate (G3P). This is Triosephosphate isomerase from Methanosarcina barkeri (strain Fusaro / DSM 804).